The chain runs to 191 residues: Clusterin (191 aa).

N-linked (GlcNAc...) asparagine glycosylation is found at N79, N116, N142, and N162. A Phosphoserine modification is found at S184.

This sequence belongs to the clusterin family. Antiparallel disulfide-linked heterodimer of an alpha chain and a beta chain. Self-associates and forms higher oligomers. Interacts with a broad range of misfolded proteins, including APP, APOC2 and LYZ. Slightly acidic pH promotes interaction with misfolded proteins. Forms high-molecular weight oligomers upon interaction with misfolded proteins. Interacts with APOA1, LRP2, CLUAP1 and PON1. Interacts with the complement membrane attack complex. Interacts (via alpha chain) with XRCC6. Interacts with SYVN1, COMMD1, BTRC, CUL1 and with ubiquitin and SCF (SKP1-CUL1-F-box protein) E3 ubiquitin-protein ligase complexes. Interacts (via alpha chain) with BAX in stressed cells, where BAX undergoes a conformation change leading to association with the mitochondrial membrane. Does not interact with BAX in unstressed cells. Found in a complex with LTF, CLU, EPPIN and SEMG1. Interacts (immaturely glycosylated pre-secreted form) with HSPA5; this interaction promotes CLU stability and facilitates stress-induced CLU retrotranslocation from the secretory pathway to the mitochondria, thereby reducing stress-induced apoptosis by stabilizing mitochondrial membrane integrity. Interacts with BCL2L1; this interaction releases and activates BAX and promotes cell death. Interacts with TGFBR2 and ACVR1. Interacts (secreted form) with STMN3; this interaction may act as an important modulator during neuronal differentiation. Proteolytically cleaved on its way through the secretory system, probably within the Golgi lumen. Proteolytic cleavage is not necessary for its chaperone activity. All non-secreted forms are not proteolytically cleaved. Chaperone activity of uncleaved forms is dependent on a non-reducing environment. In terms of processing, polyubiquitinated, leading to proteasomal degradation. Under cellular stress, the intracellular level of cleaved form is reduced due to proteasomal degradation. Post-translationally, heavily N-glycosylated. About 30% of the protein mass is comprised of complex N-linked carbohydrate. Endoplasmic reticulum (ER) stress induces changes in glycosylation status and increases level of hypoglycosylated forms. Core carbohydrates are essential for chaperone activity. Non-secreted forms are hypoglycosylated or unglycosylated.

The protein localises to the secreted. The protein resides in the nucleus. Its subcellular location is the cytoplasm. It is found in the mitochondrion membrane. It localises to the cytosol. The protein localises to the microsome. The protein resides in the endoplasmic reticulum. Its subcellular location is the mitochondrion. It is found in the perinuclear region. It localises to the cytoplasmic vesicle. The protein localises to the secretory vesicle. The protein resides in the chromaffin granule. Its function is as follows. Functions as extracellular chaperone that prevents aggregation of non native proteins. Prevents stress-induced aggregation of blood plasma proteins. Inhibits formation of amyloid fibrils by APP, APOC2, B2M, CALCA, CSN3, SNCA and aggregation-prone LYZ variants (in vitro). Does not require ATP. Maintains partially unfolded proteins in a state appropriate for subsequent refolding by other chaperones, such as HSPA8/HSC70. Does not refold proteins by itself. Binding to cell surface receptors triggers internalization of the chaperone-client complex and subsequent lysosomal or proteasomal degradation. When secreted, protects cells against apoptosis and against cytolysis by complement: inhibits assembly of the complement membrane attack complex (MAC) by preventing polymerization of C9 pore component of the MAC complex. Intracellular forms interact with ubiquitin and SCF (SKP1-CUL1-F-box protein) E3 ubiquitin-protein ligase complexes and promote the ubiquitination and subsequent proteasomal degradation of target proteins. Promotes proteasomal degradation of COMMD1 and IKBKB. Modulates NF-kappa-B transcriptional activity. Following stress, promotes apoptosis. Inhibits apoptosis when associated with the mitochondrial membrane by interference with BAX-dependent release of cytochrome c into the cytoplasm. Plays a role in the regulation of cell proliferation. An intracellular form suppresses stress-induced apoptosis by stabilizing mitochondrial membrane integrity through interaction with HSPA5. Secreted form does not affect caspase or BAX-mediated intrinsic apoptosis and TNF-induced NF-kappa-B-activity. Secreted form act as an important modulator during neuronal differentiation through interaction with STMN3. Plays a role in the clearance of immune complexes that arise during cell injury. The polypeptide is Clusterin (Mesocricetus auratus (Golden hamster)).